The chain runs to 210 residues: Redox-sensing transcriptional repressor Rex (210 aa).

Positions 17-56 (KYHRYLYELLKNDVDRISSKELSEKIGFTASQIRQDLNCF) form a DNA-binding region, H-T-H motif. 91 to 96 (GAGNIG) provides a ligand contact to NAD(+).

The protein belongs to the transcriptional regulatory Rex family. As to quaternary structure, homodimer.

Its subcellular location is the cytoplasm. Functionally, modulates transcription in response to changes in cellular NADH/NAD(+) redox state. This Clostridium botulinum (strain Loch Maree / Type A3) protein is Redox-sensing transcriptional repressor Rex.